We begin with the raw amino-acid sequence, 449 residues long: Tryptophan--tRNA ligase (449 aa).

ATP contacts are provided by residues 10–12 (TTT) and 18–19 (GN). The 'HIGH' region motif lies at 11–19 (TTGTPHLGN). Aspartate 143 contributes to the L-tryptophan binding site. ATP-binding positions include 155–157 (GRD), leucine 197, and 204–208 (KMSKS). The 'KMSKS' region signature appears at 204–208 (KMSKS).

It belongs to the class-I aminoacyl-tRNA synthetase family. As to quaternary structure, homodimer.

The protein localises to the cytoplasm. It catalyses the reaction tRNA(Trp) + L-tryptophan + ATP = L-tryptophyl-tRNA(Trp) + AMP + diphosphate + H(+). In terms of biological role, catalyzes the attachment of tryptophan to tRNA(Trp). In Pseudomonas putida (strain ATCC 47054 / DSM 6125 / CFBP 8728 / NCIMB 11950 / KT2440), this protein is Tryptophan--tRNA ligase.